The chain runs to 1271 residues: Zinc finger transcription factor Trps1 (1271 aa).

Disordered regions lie at residues 1–76 (MVRK…DSAS) and 124–155 (SPIK…DMSP). Residues 34 to 49 (SKEISTDPMQENSEQS) are compositionally biased toward polar residues. The segment covering 54–65 (HNSDDHSFHDQE) has biased composition (basic and acidic residues). Residues 66 to 76 (PSSSINKDSAS) show a composition bias toward polar residues. The C2H2-type 1; atypical zinc-finger motif lies at 217–242 (FKCNICGYGYYGNDPTDLIKHFRKYH). Residues 328–353 (FRCKFCNFTYLAKSATELEQHFLKTH) form a C2H2-type 2; atypical zinc finger. A disordered region spans residues 353-387 (HPNKMKMSSDSGKPSEKSTNKSSPIPRSCEPGDLG). The segment at 426 to 451 (YWCKFCSFSCESSSNSKLLEHHSKQH) adopts a C2H2-type 3; atypical zinc-finger fold. The C2H2-type 4; atypical zinc finger occupies 513-543 (YNCQFCDFRYSKSHGPEVILVGPLLRHYQQH). 3 C2H2-type zinc fingers span residues 604–627 (HQCD…ENAH), 656–679 (HSCT…RRVH), and 682–705 (YKCR…NSAH). The segment at 843–877 (GVTAGASGEKSGQHTPQYPTAGDSKSKDESQSLLR) is disordered. The segment at 886 to 910 (CANCLTTKTSLWRKNANGGYVCNAC) adopts a GATA-type zinc-finger fold. 3 disordered regions span residues 938–987 (RTRK…RENQ), 1031–1064 (SPQE…YMRP), and 1154–1196 (LDLA…EKSD). A compositionally biased stretch (basic and acidic residues) spans 972 to 985 (IRSEDHSMEGHQRE). Residues 1031–1049 (SPQESSGEPGNSSSVSDGK) are compositionally biased toward low complexity. Composition is skewed to basic and acidic residues over residues 1050–1062 (GSSE…EKYM) and 1170–1196 (DSKE…EKSD). The tract at residues 1153-1271 (PLDLAMKHSR…QAEKNGKNKD (119 aa)) is transcriptional repressor domain. Glycyl lysine isopeptide (Lys-Gly) (interchain with G-Cter in SUMO) cross-links involve residues Lys1182 and Lys1191. 2 consecutive C2H2-type zinc fingers follow at residues 1205-1227 (TKCV…MSCH) and 1233-1257 (FQCS…RGLH).

Binds specifically to GATA sequences. Sumoylated. Sumoylation in the repressor domain inhibits the transcription repression activity. Sumoylation on Lys-1191 is the major site. Appears to be sumoylated on multiple sites.

The protein resides in the nucleus. In terms of biological role, transcriptional repressor. Represses expression of GATA-regulated genes at selected sites and stages in vertebrate development. The chain is Zinc finger transcription factor Trps1 (trps1) from Xenopus laevis (African clawed frog).